We begin with the raw amino-acid sequence, 93 residues long: Co-chaperonin GroES (93 aa).

It belongs to the GroES chaperonin family. In terms of assembly, heptamer of 7 subunits arranged in a ring. Interacts with the chaperonin GroEL.

The protein localises to the cytoplasm. Together with the chaperonin GroEL, plays an essential role in assisting protein folding. The GroEL-GroES system forms a nano-cage that allows encapsulation of the non-native substrate proteins and provides a physical environment optimized to promote and accelerate protein folding. GroES binds to the apical surface of the GroEL ring, thereby capping the opening of the GroEL channel. The chain is Co-chaperonin GroES from Geobacillus kaustophilus (strain HTA426).